The primary structure comprises 291 residues: Protease HtpX homolog (291 aa).

2 consecutive transmembrane segments (helical) span residues 4–24 and 38–58; these read VILF…TARI and MGML…ISLL. Position 144 (H144) interacts with Zn(2+). The active site involves E145. A Zn(2+)-binding site is contributed by H148. 2 helical membrane passes run 159–179 and 199–219; these read LIQG…AYAV and ISSI…VMFF. Residue E224 participates in Zn(2+) binding.

The protein belongs to the peptidase M48B family. Zn(2+) is required as a cofactor.

It is found in the cell inner membrane. The protein is Protease HtpX homolog of Pelodictyon phaeoclathratiforme (strain DSM 5477 / BU-1).